A 267-amino-acid chain; its full sequence is L-aspartate dehydrogenase (267 aa).

NAD(+) is bound by residues Ala-124 and Asn-190. The active site involves His-218.

This sequence belongs to the L-aspartate dehydrogenase family.

The enzyme catalyses L-aspartate + NADP(+) + H2O = oxaloacetate + NH4(+) + NADPH + H(+). It catalyses the reaction L-aspartate + NAD(+) + H2O = oxaloacetate + NH4(+) + NADH + H(+). It functions in the pathway cofactor biosynthesis; NAD(+) biosynthesis; iminoaspartate from L-aspartate (dehydrogenase route): step 1/1. Specifically catalyzes the NAD or NADP-dependent dehydrogenation of L-aspartate to iminoaspartate. This chain is L-aspartate dehydrogenase, found in Methanocaldococcus jannaschii (strain ATCC 43067 / DSM 2661 / JAL-1 / JCM 10045 / NBRC 100440) (Methanococcus jannaschii).